The sequence spans 89 residues: Small ribosomal subunit protein uS15 (89 aa).

This sequence belongs to the universal ribosomal protein uS15 family. Part of the 30S ribosomal subunit. Forms a bridge to the 50S subunit in the 70S ribosome, contacting the 23S rRNA.

One of the primary rRNA binding proteins, it binds directly to 16S rRNA where it helps nucleate assembly of the platform of the 30S subunit by binding and bridging several RNA helices of the 16S rRNA. Functionally, forms an intersubunit bridge (bridge B4) with the 23S rRNA of the 50S subunit in the ribosome. The polypeptide is Small ribosomal subunit protein uS15 (Haemophilus influenzae (strain PittGG)).